The sequence spans 207 residues: Strobilurin A biosynthesis cluster protein r1 (207 aa).

A run of 2 helical transmembrane segments spans residues 108 to 128 (FIFP…LLYL) and 169 to 189 (NLTT…PFWI).

The protein resides in the membrane. It participates in mycotoxin biosynthesis. Its function is as follows. Part of the gene cluster that mediates the biosynthesis of strobilurin A, an antifungal polyketide that contains a key beta-methoxyacrylate toxophore that targets the complex III of the mitochondrial electron transport chain. Strobilurin biosynthesis begins with construction of benzoyl CoA by step-wise elimination of ammonia from phenylalanine by the phenylalanine ammonia-lyase str11, oxygenation by str8 and retro-Claisen reaction to form benzoic acid, which is activated to its CoA thiolester benzoyl CoA by the dedicated CoA ligase str10. Benzoyl CoA forms the starter unit for the highly reducing polyketide synthase stpks1 that produces the polyketide prestrobilutin A. The FAD-dependent oxygenase str9 then catalyzes the key oxidative rearrangement responsible for the creation of the beta-methoxyacrylate toxophore. Str9 performs epoxidation of the 2,3 olefin of prestrobilutin A, followed by Meinwald rearrangement to furnish the aldehyde intermediate. Rapid enolization of the aldehyde intermediate would give the beta-methoxyacrylate skeleton and methylations catalyzed by str2 and str3 complete the synthesis and lead to the production of strobilurin A. The short-chain dehydrogenase stl2 and the dehydrogenase str4 play a role in the shunt pathway leading to the production of bolineol. The cluster encodes no obvious halogenase gene that could be involved in production of strobilurin B, nor any obvious dimethylallyl-transferase that could be involved in the production of strobilurin G. It is possible that unknown proteins encoded in, or near, the cluster (such as str1 or stl1) may form new classes of halogenases or dimethylally-transferases, or that the responsible genes are located elsewhere on the genome. Similarly, proteins encoded by str5/str6 hydrolases appear to have no chemical role in the biosynthesis of strobilurin A. Finally, no obvious self-resistance gene is found within the cluster. In Strobilurus tenacellus, this protein is Strobilurin A biosynthesis cluster protein r1.